The chain runs to 373 residues: 4-hydroxy-3-methylbut-2-en-1-yl diphosphate synthase (flavodoxin) (373 aa).

Residues Cys-270, Cys-273, Cys-305, and Glu-312 each coordinate [4Fe-4S] cluster.

Belongs to the IspG family. The cofactor is [4Fe-4S] cluster.

It catalyses the reaction (2E)-4-hydroxy-3-methylbut-2-enyl diphosphate + oxidized [flavodoxin] + H2O + 2 H(+) = 2-C-methyl-D-erythritol 2,4-cyclic diphosphate + reduced [flavodoxin]. It participates in isoprenoid biosynthesis; isopentenyl diphosphate biosynthesis via DXP pathway; isopentenyl diphosphate from 1-deoxy-D-xylulose 5-phosphate: step 5/6. Its function is as follows. Converts 2C-methyl-D-erythritol 2,4-cyclodiphosphate (ME-2,4cPP) into 1-hydroxy-2-methyl-2-(E)-butenyl 4-diphosphate. In Vibrio atlanticus (strain LGP32) (Vibrio splendidus (strain Mel32)), this protein is 4-hydroxy-3-methylbut-2-en-1-yl diphosphate synthase (flavodoxin).